A 179-amino-acid chain; its full sequence is Ubiquitin-conjugating enzyme E2 2 (179 aa).

Residues 1-28 form a disordered region; the sequence is MSTPARRRLMRDFKRMQQDPPSGVSASP. Residues 4-150 form the UBC core domain; that stretch reads PARRRLMRDF…VRETVENSWN (147 aa). Cys-88 serves as the catalytic Glycyl thioester intermediate. A disordered region spans residues 145 to 179; the sequence is VENSWNDDDDEEEEEEDEDEAEDEDDDDDDNIDED. Residues 149–179 show a composition bias toward acidic residues; it reads WNDDDDEEEEEEDEDEAEDEDDDDDDNIDED. The segment at 151-179 is acidic tail; it reads DDDDEEEEEEDEDEAEDEDDDDDDNIDED.

The protein belongs to the ubiquitin-conjugating enzyme family.

The protein resides in the cytoplasm. The protein localises to the nucleus. The enzyme catalyses S-ubiquitinyl-[E1 ubiquitin-activating enzyme]-L-cysteine + [E2 ubiquitin-conjugating enzyme]-L-cysteine = [E1 ubiquitin-activating enzyme]-L-cysteine + S-ubiquitinyl-[E2 ubiquitin-conjugating enzyme]-L-cysteine.. It functions in the pathway protein modification; protein ubiquitination. In terms of biological role, catalyzes the covalent attachment of ubiquitin to other proteins. Plays a role in transcription regulation by catalyzing the monoubiquitination of histone H2B to form H2BK123ub1. H2BK123ub1 gives a specific tag for epigenetic transcriptional activation and is also a prerequisite for H3K4me and H3K79me formation. Also involved in postreplication repair of UV-damaged DNA, in N-end rule-dependent protein degradation and in sporulation. This is Ubiquitin-conjugating enzyme E2 2 (UBC2) from Candida albicans (strain SC5314 / ATCC MYA-2876) (Yeast).